The primary structure comprises 182 residues: Translation initiation factor IF-3 (182 aa).

It belongs to the IF-3 family. As to quaternary structure, monomer.

The protein localises to the cytoplasm. In terms of biological role, IF-3 binds to the 30S ribosomal subunit and shifts the equilibrium between 70S ribosomes and their 50S and 30S subunits in favor of the free subunits, thus enhancing the availability of 30S subunits on which protein synthesis initiation begins. The sequence is that of Translation initiation factor IF-3 from Endomicrobium trichonymphae.